Consider the following 87-residue polypeptide: Precursor of CEP8 (87 aa).

A signal peptide spans 1-29; sequence MAKALFFNFCISLLIIAILVSHEIIPTEA. Positions 30 to 72 are excised as a propeptide; that stretch reads RHLRTHRKSIKNSTLTVHEGAGGLRTGGGSVKTDISKEEHGVD. N-linked (GlcNAc...) asparagine glycosylation occurs at Asn-41. The interval 41-87 is disordered; it reads NSTLTVHEGAGGLRTGGGSVKTDISKEEHGVDEFRPTTPGNSPGIGH. A compositionally biased stretch (gly residues) spans 49–59; the sequence is GAGGLRTGGGS. A compositionally biased stretch (basic and acidic residues) spans 63–75; the sequence is DISKEEHGVDEFR. Pro-76, Pro-79, and Pro-83 each carry hydroxyproline.

This sequence belongs to the C-terminally encoded plant signaling peptide (CEP) family. In terms of assembly, interacts with CEP receptors (e.g. CEPR1 and CEPR2). Post-translationally, the mature small signaling peptide is generated by proteolytic processing of the longer precursor. As to expression, expressed in lateral root primordia and in lateral roots excluding the meristem region. Also present in the aerial tissues, such as leaf petioles and the shoot apex region.

It localises to the secreted. The protein localises to the extracellular space. Its subcellular location is the apoplast. Functionally, extracellular signaling peptide that may regulate primary root growth rate and systemic nitrogen (N)-demand signaling. Mediates up-regulation of genes involved in N uptake and assimilation pathways. This is Precursor of CEP8 from Arabidopsis thaliana (Mouse-ear cress).